An 89-amino-acid chain; its full sequence is MTVTAERKTAIIADNARANGDTGSPEVQVAILTERINNLTEHFKSHAKDNHSRRGLLMLVNKRRRLLDYLKRKDAERYTALIGKLGLRK.

This sequence belongs to the universal ribosomal protein uS15 family. In terms of assembly, part of the 30S ribosomal subunit. Forms a bridge to the 50S subunit in the 70S ribosome, contacting the 23S rRNA.

Functionally, one of the primary rRNA binding proteins, it binds directly to 16S rRNA where it helps nucleate assembly of the platform of the 30S subunit by binding and bridging several RNA helices of the 16S rRNA. In terms of biological role, forms an intersubunit bridge (bridge B4) with the 23S rRNA of the 50S subunit in the ribosome. The chain is Small ribosomal subunit protein uS15 from Rhizorhabdus wittichii (strain DSM 6014 / CCUG 31198 / JCM 15750 / NBRC 105917 / EY 4224 / RW1) (Sphingomonas wittichii).